Consider the following 229-residue polypeptide: Growth factor receptor-bound protein 2 (229 aa).

2 consecutive SH3 domains span residues 1-58 (MEAV…MKPH) and 168-227 (QQPT…PVNR). In terms of domain architecture, SH2 spans 60-171 (WFFGKIPRAK…RATNLLQQPT (112 aa)).

It is found in the nucleus. The protein resides in the cytoplasm. The protein localises to the endosome. It localises to the golgi apparatus. Its function is as follows. Adapter protein that provides a critical link between cell surface growth factor receptors and the Ras signaling pathway. Promotes meiotic reinitiation during oocyte maturation. The sequence is that of Growth factor receptor-bound protein 2 from Xenopus tropicalis (Western clawed frog).